Here is a 395-residue protein sequence, read N- to C-terminus: S-adenosylmethionine synthase 3 (395 aa).

A Mg(2+)-binding site is contributed by E10. H16 provides a ligand contact to ATP. Residue E44 participates in K(+) binding. L-methionine is bound by residues E57 and Q100. ATP-binding positions include 168 to 170, 236 to 239, D247, 253 to 254, A270, K274, and K278; these read DGK, SGRF, and RK. D247 serves as a coordination point for L-methionine. Residue K278 participates in L-methionine binding.

The protein belongs to the AdoMet synthase family. In terms of assembly, homotetramer. Requires Mn(2+) as cofactor. Mg(2+) serves as cofactor. It depends on Co(2+) as a cofactor. K(+) is required as a cofactor.

The protein localises to the cytoplasm. The enzyme catalyses L-methionine + ATP + H2O = S-adenosyl-L-methionine + phosphate + diphosphate. It participates in amino-acid biosynthesis; S-adenosyl-L-methionine biosynthesis; S-adenosyl-L-methionine from L-methionine: step 1/1. In terms of biological role, catalyzes the formation of S-adenosylmethionine from methionine and ATP. The reaction comprises two steps that are both catalyzed by the same enzyme: formation of S-adenosylmethionine (AdoMet) and triphosphate, and subsequent hydrolysis of the triphosphate. The polypeptide is S-adenosylmethionine synthase 3 (METK3) (Populus trichocarpa (Western balsam poplar)).